Consider the following 267-residue polypeptide: Protein I267L (267 aa).

It belongs to the asfivirus I267L family. In terms of assembly, interacts with host RNF135.

Functionally, plays a role in the inhibition of host RNA Pol-III-RIGI-mediated innate antiviral response. Mechanistically, interacts with host E3 ubiquitin ligase RNF135, disrupting RNF135-RIGI interaction and impairing RNF135-mediated 'Lys-63'-polyubiquitination and activation of RIGI. This is Protein I267L from African swine fever virus (strain Badajoz 1971 Vero-adapted) (Ba71V).